Reading from the N-terminus, the 558-residue chain is Proline--tRNA ligase (558 aa).

It belongs to the class-II aminoacyl-tRNA synthetase family. ProS type 1 subfamily. Homodimer.

The protein resides in the cytoplasm. The enzyme catalyses tRNA(Pro) + L-proline + ATP = L-prolyl-tRNA(Pro) + AMP + diphosphate. In terms of biological role, catalyzes the attachment of proline to tRNA(Pro) in a two-step reaction: proline is first activated by ATP to form Pro-AMP and then transferred to the acceptor end of tRNA(Pro). As ProRS can inadvertently accommodate and process non-cognate amino acids such as alanine and cysteine, to avoid such errors it has two additional distinct editing activities against alanine. One activity is designated as 'pretransfer' editing and involves the tRNA(Pro)-independent hydrolysis of activated Ala-AMP. The other activity is designated 'posttransfer' editing and involves deacylation of mischarged Ala-tRNA(Pro). The misacylated Cys-tRNA(Pro) is not edited by ProRS. This chain is Proline--tRNA ligase, found in Coprothermobacter proteolyticus (strain ATCC 35245 / DSM 5265 / OCM 4 / BT).